The following is a 288-amino-acid chain: Undecaprenyl-diphosphatase (288 aa).

The next 8 membrane-spanning stretches (helical) occupy residues Gly-25 to Leu-45, Phe-53 to Tyr-73, Trp-93 to Leu-113, Leu-121 to Ile-141, Val-171 to Val-191, Ser-196 to Leu-216, Gly-231 to Ile-251, and Phe-263 to Val-283.

This sequence belongs to the UppP family.

The protein resides in the cell membrane. The enzyme catalyses di-trans,octa-cis-undecaprenyl diphosphate + H2O = di-trans,octa-cis-undecaprenyl phosphate + phosphate + H(+). Functionally, catalyzes the dephosphorylation of undecaprenyl diphosphate (UPP). Confers resistance to bacitracin. The polypeptide is Undecaprenyl-diphosphatase (Streptococcus thermophilus (strain CNRZ 1066)).